The following is a 92-amino-acid chain: UPF0213 protein MGAS9429_Spy1198 (92 aa).

The GIY-YIG domain occupies 4–80 (KKAYMYVLEC…KRKTRSQKLA (77 aa)).

This sequence belongs to the UPF0213 family.

The sequence is that of UPF0213 protein MGAS9429_Spy1198 from Streptococcus pyogenes serotype M12 (strain MGAS9429).